The primary structure comprises 341 residues: THO complex subunit 6 (341 aa).

WD repeat units follow at residues 22–61 (RLHM…SSEA), 74–112 (AHDG…GCKE), 124–165 (LEVP…RVLR), 166–205 (GHTD…EVQT), 215–254 (SRPH…PTTI), 256–293 (PIRA…KAQV), and 295–339 (GSSP…AFSL). The residue at position 180 (serine 180) is a Phosphoserine.

It belongs to the WD repeat THOC6 family. In terms of assembly, component of the THO subcomplex, which is composed of THOC1, THOC2, THOC3, THOC5, THOC6 and THOC7. The THO subcomplex interacts with DDX39B to form the THO-DDX39B complex which multimerizes into a 28-subunit tetrameric assembly. Component of the transcription/export (TREX) complex at least composed of ALYREF/THOC4, DDX39B, SARNP/CIP29, CHTOP and the THO subcomplex; in the complex interacts with THOC5; together with THOC5 and THOC7, plays a key structural role in the oligomerization of the THO-DDX39B complex. TREX seems to have a dynamic structure involving ATP-dependent remodeling.

It is found in the nucleus. It localises to the nucleus speckle. Its function is as follows. Component of the THO subcomplex of the TREX complex which is thought to couple mRNA transcription, processing and nuclear export, and which specifically associates with spliced mRNA and not with unspliced pre-mRNA. Plays a key structural role in the oligomerization of the THO-DDX39B complex. TREX is recruited to spliced mRNAs by a transcription-independent mechanism, binds to mRNA upstream of the exon-junction complex (EJC) and is recruited in a splicing- and cap-dependent manner to a region near the 5' end of the mRNA where it functions in mRNA export to the cytoplasm via the TAP/NXF1 pathway. Plays a role in apoptosis negative control involved in brain development. (Microbial infection) The TREX complex is essential for the export of Kaposi's sarcoma-associated herpesvirus (KSHV) intronless mRNAs and infectious virus production. The protein is THO complex subunit 6 (THOC6) of Homo sapiens (Human).